Here is a 460-residue protein sequence, read N- to C-terminus: tRNA modification GTPase MnmE (460 aa).

Arginine 29, glutamate 91, and lysine 132 together coordinate (6S)-5-formyl-5,6,7,8-tetrahydrofolate. Positions 227-383 (GISIALIGKT…LIDTIIKKCG (157 aa)) constitute a TrmE-type G domain. Asparagine 237 contributes to the K(+) binding site. Residues 237–242 (NVGKSS), 256–262 (TNIPGTT), and 281–284 (DTAG) each bind GTP. Residue serine 241 coordinates Mg(2+). K(+) is bound by residues threonine 256, isoleucine 258, and threonine 261. Mg(2+) is bound at residue threonine 262. Lysine 460 serves as a coordination point for (6S)-5-formyl-5,6,7,8-tetrahydrofolate.

Belongs to the TRAFAC class TrmE-Era-EngA-EngB-Septin-like GTPase superfamily. TrmE GTPase family. As to quaternary structure, homodimer. Heterotetramer of two MnmE and two MnmG subunits. K(+) serves as cofactor.

The protein resides in the cytoplasm. In terms of biological role, exhibits a very high intrinsic GTPase hydrolysis rate. Involved in the addition of a carboxymethylaminomethyl (cmnm) group at the wobble position (U34) of certain tRNAs, forming tRNA-cmnm(5)s(2)U34. This is tRNA modification GTPase MnmE from Prochlorococcus marinus (strain MIT 9215).